The sequence spans 257 residues: Imidazole glycerol phosphate synthase subunit HisF (257 aa).

Catalysis depends on residues aspartate 11 and aspartate 130.

This sequence belongs to the HisA/HisF family. Heterodimer of HisH and HisF.

It is found in the cytoplasm. The catalysed reaction is 5-[(5-phospho-1-deoxy-D-ribulos-1-ylimino)methylamino]-1-(5-phospho-beta-D-ribosyl)imidazole-4-carboxamide + L-glutamine = D-erythro-1-(imidazol-4-yl)glycerol 3-phosphate + 5-amino-1-(5-phospho-beta-D-ribosyl)imidazole-4-carboxamide + L-glutamate + H(+). It functions in the pathway amino-acid biosynthesis; L-histidine biosynthesis; L-histidine from 5-phospho-alpha-D-ribose 1-diphosphate: step 5/9. IGPS catalyzes the conversion of PRFAR and glutamine to IGP, AICAR and glutamate. The HisF subunit catalyzes the cyclization activity that produces IGP and AICAR from PRFAR using the ammonia provided by the HisH subunit. The protein is Imidazole glycerol phosphate synthase subunit HisF of Actinobacillus pleuropneumoniae serotype 7 (strain AP76).